The sequence spans 175 residues: uncharacterized protein (175 aa).

It to yeast YER187w.

This is an uncharacterized protein from Saccharomyces cerevisiae (strain ATCC 204508 / S288c) (Baker's yeast).